Here is a 392-residue protein sequence, read N- to C-terminus: MKFVDEATIKVDAGDGGNGTVSFWREKFVAKGGPDGGDGGDGGDVYLEADENLNTLIDYRFNRFYDAERGKNGGGTNSTGRRGEDITLKVPVGTRAIDIDTGEKVAELMAHGMKIMVAKGGWHGLGNTRFKSSVNRAPRQKTMGTKGEVRELRLELLLLADVGMLGLPNAGKSTFIRAVSAAKPKVADYPFTTLIPSLGVVRARGNKSFVIADIPGLIEGAAEGAGLGVRFLKHLERCRVLLHVIDILPIDGSDPVQNALTIIDELERYSEKVAGKPRWLLFNKTDLLLEAEADEKIAEILEALAWEGAHFKIAAVSRTGTQEVCNELSDFMDTLPKEIMTDEEKAALKVDFMWDDYHKDAMSGKNVVTEDGDDDDDWDDEEDDGHVIYARD.

Residues 1 to 159 form the Obg domain; the sequence is MKFVDEATIK…RELRLELLLL (159 aa). An OBG-type G domain is found at 160 to 333; it reads ADVGMLGLPN…VCNELSDFMD (174 aa). Residues 166 to 173, 191 to 195, 213 to 216, 283 to 286, and 314 to 316 each bind GTP; these read GLPNAGKS, FTTLI, DIPG, NKTD, and AAV. Mg(2+) contacts are provided by Ser-173 and Thr-193. Positions 364–392 are disordered; sequence GKNVVTEDGDDDDDWDDEEDDGHVIYARD. The segment covering 370–384 has biased composition (acidic residues); the sequence is EDGDDDDDWDDEEDD.

The protein belongs to the TRAFAC class OBG-HflX-like GTPase superfamily. OBG GTPase family. Monomer. Requires Mg(2+) as cofactor.

The protein localises to the cytoplasm. In terms of biological role, an essential GTPase which binds GTP, GDP and possibly (p)ppGpp with moderate affinity, with high nucleotide exchange rates and a fairly low GTP hydrolysis rate. Plays a role in control of the cell cycle, stress response, ribosome biogenesis and in those bacteria that undergo differentiation, in morphogenesis control. The sequence is that of GTPase Obg from Aliivibrio salmonicida (strain LFI1238) (Vibrio salmonicida (strain LFI1238)).